Here is a 611-residue protein sequence, read N- to C-terminus: Protein PES4 (611 aa).

The segment at 37–81 (FNPVVTPIRPDDYHEKTSRSSSSSHSDSPEFLRINNNKSGHKNGK) is disordered. Basic and acidic residues predominate over residues 45-54 (RPDDYHEKTS). RRM domains follow at residues 91–169 (VPLF…PSLR), 179–247 (TNVF…GKKI), 303–379 (NSIF…RAQD), and 393–471 (STLF…WERQ).

It is found in the nucleus. This is Protein PES4 (PES4) from Saccharomyces cerevisiae (strain ATCC 204508 / S288c) (Baker's yeast).